Reading from the N-terminus, the 457-residue chain is Putative HD domain-containing protein L394 (457 aa).

The HD domain occupies 65–206; the sequence is RLEHSIGVYD…GIDVDKFDYL (142 aa).

This Acanthamoeba polyphaga mimivirus (APMV) protein is Putative HD domain-containing protein L394.